A 901-amino-acid chain; its full sequence is Protein translocase subunit SecA (901 aa).

Residues Gln87, Gly105–Thr109, and Asp512 contribute to the ATP site. The tract at residues His859–Gln901 is disordered. Zn(2+)-binding residues include Cys885, Cys887, Cys896, and His897. Residues Lys891–Gln901 show a composition bias toward basic residues.

It belongs to the SecA family. Monomer and homodimer. Part of the essential Sec protein translocation apparatus which comprises SecA, SecYEG and auxiliary proteins SecDF-YajC and YidC. Zn(2+) serves as cofactor.

The protein resides in the cell inner membrane. Its subcellular location is the cytoplasm. The enzyme catalyses ATP + H2O + cellular proteinSide 1 = ADP + phosphate + cellular proteinSide 2.. Functionally, part of the Sec protein translocase complex. Interacts with the SecYEG preprotein conducting channel. Has a central role in coupling the hydrolysis of ATP to the transfer of proteins into and across the cell membrane, serving both as a receptor for the preprotein-SecB complex and as an ATP-driven molecular motor driving the stepwise translocation of polypeptide chains across the membrane. The protein is Protein translocase subunit SecA of Escherichia coli O6:K15:H31 (strain 536 / UPEC).